The following is a 225-amino-acid chain: Late embryogenesis abundant protein 29 (225 aa).

Disordered regions lie at residues 1–167 (MASN…GGFL) and 193–225 (TEEEDKEHYPGSTTTTTATTRTTDPTHQTYQRK). Composition is skewed to basic and acidic residues over residues 28-39 (MRDKAEEGRDKT), 49-61 (KAHETAQSAKDKT), 71-83 (KAHETAQSAKEKT), and 93-119 (KAHETTQAAKEKTSQAGDKAREAKDKA). LEA 11-mer repeat repeat units follow at residues 53 to 63 (TAQSAKDKTSQ), 75 to 85 (TAQSAKEKTSQ), and 97 to 107 (TTQAAKEKTSQ). The span at 141 to 153 (TKETAQGAAQYTK) shows a compositional bias: polar residues. A compositionally biased stretch (basic and acidic residues) spans 154 to 163 (ETAEAGRDKT). The segment covering 205–225 (TTTTTATTRTTDPTHQTYQRK) has biased composition (low complexity).

It belongs to the LEA type 4 family.

It localises to the cytoplasm. Its subcellular location is the cytosol. Involved dehydration tolerance. This chain is Late embryogenesis abundant protein 29, found in Arabidopsis thaliana (Mouse-ear cress).